Here is a 446-residue protein sequence, read N- to C-terminus: Maltoporin (446 aa).

The N-terminal stretch at 1–25 (MMITLRKLPLAVAVAAGVMSAQAMA) is a signal peptide.

This sequence belongs to the porin LamB (TC 1.B.3) family. As to quaternary structure, homotrimer formed of three 18-stranded antiparallel beta-barrels, containing three independent channels.

The protein localises to the cell outer membrane. It catalyses the reaction beta-maltose(in) = beta-maltose(out). In terms of biological role, involved in the transport of maltose and maltodextrins. The sequence is that of Maltoporin from Escherichia coli O8 (strain IAI1).